The primary structure comprises 162 residues: uncharacterized protein (162 aa).

Pentapeptide repeat domains lie at 33–72 (ASLIGAQLIFVDLGGANLTRAQLDSATLKNANLALANMTE), 73–112 (VCLIYADLSNADLSGANLVGADLTNADLSGAKLGGADLRK), and 113–152 (ANLSEASLRGADLRGVNLIEANLTNTDFSEADLTGAYISD).

This is an uncharacterized protein from Synechocystis sp. (strain ATCC 27184 / PCC 6803 / Kazusa).